A 350-amino-acid polypeptide reads, in one-letter code: MNWLFLVSLVFFCGVSTHPALAMSSNRLLKLANKSPKKIIPLKDSSFENILAPPHENAYIVALFTATAPEIGCSLCLELESEYDTIVASWFDDHPDAKSSNSDTSIFFTKVNLEDPSKTIPKAFQFFQLNNVPRLFIFKPNSPSILDHSVISISTDTGSERMKQIIQAIKQFSQVNDFSLHLPMDWTPIITSTIITFITVLLFKKQSKLMFSIISSRIIWATLSTFFIICMISAYMFNQIRNTQLAGVGPKGEVMYFLPNEFQHQFAIETQVMVLIYGTLAALVVVLVKGIQFLRSHLYPETKKAYFIDAILASFCALFIYVFFAALTTVFTIKSPAYPFPLLRLSAPFK.

The signal sequence occupies residues 1–22 (MNWLFLVSLVFFCGVSTHPALA). The Lumenal portion of the chain corresponds to 23–182 (MSSNRLLKLA…SQVNDFSLHL (160 aa)). The Thioredoxin domain maps to 29–171 (LKLANKSPKK…MKQIIQAIKQ (143 aa)). A disulfide bridge links C73 with C76. Residues 183-203 (PMDWTPIITSTIITFITVLLF) form a helical membrane-spanning segment. Topologically, residues 204 to 217 (KKQSKLMFSIISSR) are cytoplasmic. The helical transmembrane segment at 218-238 (IIWATLSTFFIICMISAYMFN) threads the bilayer. Residues 239-273 (QIRNTQLAGVGPKGEVMYFLPNEFQHQFAIETQVM) lie on the Lumenal side of the membrane. Residues 274–294 (VLIYGTLAALVVVLVKGIQFL) form a helical membrane-spanning segment. Residues 295–306 (RSHLYPETKKAY) lie on the Cytoplasmic side of the membrane. Residues 307-327 (FIDAILASFCALFIYVFFAAL) traverse the membrane as a helical segment. Residues 328 to 350 (TTVFTIKSPAYPFPLLRLSAPFK) are Lumenal-facing.

This sequence belongs to the OST3/OST6 family. Component of the oligosaccharyltransferase (OST) complex, which appears to exist in two assemblies comprising OST1, OST2, OST4, OST5, STT3, SWP1, WPB1, and either OST3 or OST6. OST assembly occurs through the formation of 3 subcomplexes. Subcomplex 1 contains OST1 and OST5, subcomplex 2 contains STT3, OST3, and OST4, and subcomplex 3 contains OST2, WBP1, and SWP1.

Its subcellular location is the endoplasmic reticulum membrane. Its pathway is protein modification; protein glycosylation. Functionally, subunit of the oligosaccharyl transferase (OST) complex that catalyzes the initial transfer of a defined glycan (Glc(3)Man(9)GlcNAc(2) in eukaryotes) from the lipid carrier dolichol-pyrophosphate to an asparagine residue within an Asn-X-Ser/Thr consensus motif in nascent polypeptide chains, the first step in protein N-glycosylation. N-glycosylation occurs cotranslationally and the complex associates with the Sec61 complex at the channel-forming translocon complex that mediates protein translocation across the endoplasmic reticulum (ER). All subunits are required for a maximal enzyme activity. The polypeptide is Dolichyl-diphosphooligosaccharide--protein glycosyltransferase subunit 3 (OST3) (Saccharomyces cerevisiae (strain ATCC 204508 / S288c) (Baker's yeast)).